The primary structure comprises 517 residues: ATP synthase subunit alpha (517 aa).

ATP is bound at residue 174–181 (GDRQTGKT).

This sequence belongs to the ATPase alpha/beta chains family. As to quaternary structure, F-type ATPases have 2 components, CF(1) - the catalytic core - and CF(0) - the membrane proton channel. CF(1) has five subunits: alpha(3), beta(3), gamma(1), delta(1), epsilon(1). CF(0) has three main subunits: a(1), b(2) and c(9-12). The alpha and beta chains form an alternating ring which encloses part of the gamma chain. CF(1) is attached to CF(0) by a central stalk formed by the gamma and epsilon chains, while a peripheral stalk is formed by the delta and b chains.

The protein resides in the cell inner membrane. It catalyses the reaction ATP + H2O + 4 H(+)(in) = ADP + phosphate + 5 H(+)(out). Functionally, produces ATP from ADP in the presence of a proton gradient across the membrane. The alpha chain is a regulatory subunit. The polypeptide is ATP synthase subunit alpha (Variovorax paradoxus (strain S110)).